We begin with the raw amino-acid sequence, 295 residues long: Shikimate dehydrogenase (NADP(+)) (295 aa).

Shikimate-binding positions include 24–26 (SRS) and threonine 71. Lysine 75 functions as the Proton acceptor in the catalytic mechanism. Glutamate 87 is a binding site for NADP(+). Shikimate-binding residues include asparagine 96 and aspartate 111. NADP(+) contacts are provided by residues 136-140 (GAGGA), 160-165 (NRTASR), and methionine 233. Residue tyrosine 235 participates in shikimate binding. Glycine 256 provides a ligand contact to NADP(+).

It belongs to the shikimate dehydrogenase family. In terms of assembly, homodimer.

The catalysed reaction is shikimate + NADP(+) = 3-dehydroshikimate + NADPH + H(+). It functions in the pathway metabolic intermediate biosynthesis; chorismate biosynthesis; chorismate from D-erythrose 4-phosphate and phosphoenolpyruvate: step 4/7. Functionally, involved in the biosynthesis of the chorismate, which leads to the biosynthesis of aromatic amino acids. Catalyzes the reversible NADPH linked reduction of 3-dehydroshikimate (DHSA) to yield shikimate (SA). This Cupriavidus necator (strain ATCC 17699 / DSM 428 / KCTC 22496 / NCIMB 10442 / H16 / Stanier 337) (Ralstonia eutropha) protein is Shikimate dehydrogenase (NADP(+)).